Reading from the N-terminus, the 166-residue chain is uncharacterized protein (166 aa).

3 helical membrane-spanning segments follow: residues 4–24 (LNIF…EASI), 101–121 (LITC…SEAI), and 146–166 (SWSS…QCFL).

Its subcellular location is the membrane. This is an uncharacterized protein from Saccharomyces cerevisiae (strain ATCC 204508 / S288c) (Baker's yeast).